Here is an 846-residue protein sequence, read N- to C-terminus: DNA mismatch repair protein MutS (846 aa).

ATP is bound at residue 610-617 (GPNMGGKS).

It belongs to the DNA mismatch repair MutS family.

Its function is as follows. This protein is involved in the repair of mismatches in DNA. It is possible that it carries out the mismatch recognition step. This protein has a weak ATPase activity. This Legionella pneumophila (strain Lens) protein is DNA mismatch repair protein MutS.